The chain runs to 209 residues: Molybdenum cofactor guanylyltransferase (209 aa).

GTP is bound by residues 13–15 (LAG), Lys-26, Asn-54, Asp-74, and Asp-104. Asp-104 is a Mg(2+) binding site.

The protein belongs to the MobA family. As to quaternary structure, monomer. It depends on Mg(2+) as a cofactor.

It localises to the cytoplasm. It catalyses the reaction Mo-molybdopterin + GTP + H(+) = Mo-molybdopterin guanine dinucleotide + diphosphate. Its function is as follows. Transfers a GMP moiety from GTP to Mo-molybdopterin (Mo-MPT) cofactor (Moco or molybdenum cofactor) to form Mo-molybdopterin guanine dinucleotide (Mo-MGD) cofactor. The sequence is that of Molybdenum cofactor guanylyltransferase from Acinetobacter baumannii (strain ACICU).